A 261-amino-acid polypeptide reads, in one-letter code: MPRYAFRIEYDGHPFKGWQRQTDLPSVQGAVEAALAKLEADVPTIAAAGRTDTGVHALGQVAHADMQRDWDPFRLAEALNYHLKPAPVAITACARAHDDFHARFSATWRSYTYRMICRRAPLVHARGHAWAVRGTLDVTAMAEGARHLIGKHDFTTFRATHCQALSPIKTMDEIRVEEVSLPAGTEIRFHLKAQSFLHNQVRSIVGSLEHVGSGAWAPDDMRRALEACDRAECGTVAPPDGLYMTGVGYDEDPFADGWKDT.

Aspartate 52 (nucleophile) is an active-site residue. Tyrosine 111 contributes to the substrate binding site.

It belongs to the tRNA pseudouridine synthase TruA family. As to quaternary structure, homodimer.

The catalysed reaction is uridine(38/39/40) in tRNA = pseudouridine(38/39/40) in tRNA. Its function is as follows. Formation of pseudouridine at positions 38, 39 and 40 in the anticodon stem and loop of transfer RNAs. The polypeptide is tRNA pseudouridine synthase A (Jannaschia sp. (strain CCS1)).